Here is a 260-residue protein sequence, read N- to C-terminus: Protein FAM220A (260 aa).

Disordered regions lie at residues methionine 1–serine 75 and glycine 129–glycine 158. Polar residues predominate over residues arginine 35 to aspartate 47.

As to quaternary structure, interacts with transcriptional activator STAT3; the interaction occurs in both the nucleus and the cytoplasm, is enhanced by IL6 and promotes STAT3 dephosphorylation, leading to negative regulation of STAT3 transcriptional activator activity. Can interact with both unphosphorylated and phosphorylated STAT3 but interacts preferentially with phosphorylated STAT3 in the nucleus. Interacts with protein phosphatase PTPN2/TC45; this promotes interaction of PTPN2 with STAT3, leading to dephosphorylation of STAT3 by PTPN2. In terms of tissue distribution, expressed at high levels in the testis where it is detected within elongated spermatids during the late stages (steps 9-16) of haploid germ cell development and in the tubular lumen (at protein level).

It is found in the nucleus. It localises to the cytoplasm. The protein resides in the cytoplasmic vesicle. The protein localises to the secretory vesicle. Its subcellular location is the acrosome. Its function is as follows. Promotes dephosphorylation of transcriptional activator STAT3 by interacting with both STAT3 and protein phosphatase PTPN2. This promotes interaction of PTPN2 with STAT3 and mediates STAT3 dephosphorylation by PTPN2, leading to negative regulation of STAT3 transcriptional activator activity. May be required for spermiogenesis or sperm function. The protein is Protein FAM220A of Mus musculus (Mouse).